Reading from the N-terminus, the 270-residue chain is Sulfur carrier protein FdhD (270 aa).

Catalysis depends on Cys-108, which acts as the Cysteine persulfide intermediate. 247-252 is a Mo-bis(molybdopterin guanine dinucleotide) binding site; that stretch reads FIRDGR.

It belongs to the FdhD family.

Its subcellular location is the cytoplasm. In terms of biological role, required for formate dehydrogenase (FDH) activity. Acts as a sulfur carrier protein that transfers sulfur from IscS to the molybdenum cofactor prior to its insertion into FDH. In Halalkalibacterium halodurans (strain ATCC BAA-125 / DSM 18197 / FERM 7344 / JCM 9153 / C-125) (Bacillus halodurans), this protein is Sulfur carrier protein FdhD.